Here is a 417-residue protein sequence, read N- to C-terminus: Probable serine/threonine-protein kinase WNK9 (417 aa).

The tract at residues 1–23 (MDLVEAEAEEQPPDEDGDEEGYV) is disordered. The 258-residue stretch at 32 to 289 (IRYDEIVGSG…ATELLKSSFL (258 aa)) folds into the Protein kinase domain. ATP contacts are provided by residues 113 to 116 (TELF) and K163. The Proton acceptor role is filled by D180.

It belongs to the protein kinase superfamily. Ser/Thr protein kinase family. WNK subfamily.

The catalysed reaction is L-seryl-[protein] + ATP = O-phospho-L-seryl-[protein] + ADP + H(+). The enzyme catalyses L-threonyl-[protein] + ATP = O-phospho-L-threonyl-[protein] + ADP + H(+). The polypeptide is Probable serine/threonine-protein kinase WNK9 (WNK9) (Oryza sativa subsp. japonica (Rice)).